A 457-amino-acid polypeptide reads, in one-letter code: Siroheme synthase (457 aa).

Positions 1–204 (MDHLPIFCQL…NDQKAITETT (204 aa)) are precorrin-2 dehydrogenase /sirohydrochlorin ferrochelatase. NAD(+) is bound by residues 22–23 (DV) and 43–44 (LA). Phosphoserine is present on S128. The segment at 216–457 (GEVVLVGAGP…RDKLNWFSNH (242 aa)) is uroporphyrinogen-III C-methyltransferase. P225 contributes to the S-adenosyl-L-methionine binding site. D248 functions as the Proton acceptor in the catalytic mechanism. The active-site Proton donor is K270. S-adenosyl-L-methionine contacts are provided by residues 301–303 (GGD), I306, 331–332 (TA), M382, and G411.

This sequence in the N-terminal section; belongs to the precorrin-2 dehydrogenase / sirohydrochlorin ferrochelatase family. It in the C-terminal section; belongs to the precorrin methyltransferase family.

It catalyses the reaction uroporphyrinogen III + 2 S-adenosyl-L-methionine = precorrin-2 + 2 S-adenosyl-L-homocysteine + H(+). The enzyme catalyses precorrin-2 + NAD(+) = sirohydrochlorin + NADH + 2 H(+). It carries out the reaction siroheme + 2 H(+) = sirohydrochlorin + Fe(2+). The protein operates within cofactor biosynthesis; adenosylcobalamin biosynthesis; precorrin-2 from uroporphyrinogen III: step 1/1. It functions in the pathway cofactor biosynthesis; adenosylcobalamin biosynthesis; sirohydrochlorin from precorrin-2: step 1/1. Its pathway is porphyrin-containing compound metabolism; siroheme biosynthesis; precorrin-2 from uroporphyrinogen III: step 1/1. It participates in porphyrin-containing compound metabolism; siroheme biosynthesis; siroheme from sirohydrochlorin: step 1/1. The protein operates within porphyrin-containing compound metabolism; siroheme biosynthesis; sirohydrochlorin from precorrin-2: step 1/1. Functionally, multifunctional enzyme that catalyzes the SAM-dependent methylations of uroporphyrinogen III at position C-2 and C-7 to form precorrin-2 via precorrin-1. Then it catalyzes the NAD-dependent ring dehydrogenation of precorrin-2 to yield sirohydrochlorin. Finally, it catalyzes the ferrochelation of sirohydrochlorin to yield siroheme. This chain is Siroheme synthase, found in Escherichia coli O6:H1 (strain CFT073 / ATCC 700928 / UPEC).